We begin with the raw amino-acid sequence, 217 residues long: MELTSLEARVIGCLLEKELTTPDQYPLSLNSLALACNQKSSREPVLSLSESQVKTVLDDLTKKRLLSEQSGFGSRVVKYKHRFCNTEFSELQLSSAEVAIICVLLLRGPQTPGELKTRTNRLHEFADVSQVETALLALSQREKPLVVQLAREANKRDCRFLECFSGNVDDYDVNSSDAIVVSNHTQQTLQQDSKIVELEQRVKLLEQKLAQLESLLN.

Belongs to the UPF0502 family.

This is UPF0502 protein Sfri_1696 from Shewanella frigidimarina (strain NCIMB 400).